We begin with the raw amino-acid sequence, 431 residues long: Histidinol dehydrogenase (431 aa).

The NAD(+) site is built by Tyr-130, Gln-191, and Asn-214. Substrate-binding residues include Ser-237, Gln-259, and His-262. Gln-259 and His-262 together coordinate Zn(2+). Active-site proton acceptor residues include Glu-327 and His-328. Residues His-328, Asp-361, Glu-415, and His-420 each coordinate substrate. Asp-361 is a Zn(2+) binding site. His-420 lines the Zn(2+) pocket.

The protein belongs to the histidinol dehydrogenase family. Zn(2+) serves as cofactor.

It catalyses the reaction L-histidinol + 2 NAD(+) + H2O = L-histidine + 2 NADH + 3 H(+). It participates in amino-acid biosynthesis; L-histidine biosynthesis; L-histidine from 5-phospho-alpha-D-ribose 1-diphosphate: step 9/9. Catalyzes the sequential NAD-dependent oxidations of L-histidinol to L-histidinaldehyde and then to L-histidine. The sequence is that of Histidinol dehydrogenase from Rhodopseudomonas palustris (strain ATCC BAA-98 / CGA009).